A 143-amino-acid polypeptide reads, in one-letter code: Large ribosomal subunit protein uL16c (143 aa).

Belongs to the universal ribosomal protein uL16 family. In terms of assembly, part of the 50S ribosomal subunit.

Its subcellular location is the plastid. It is found in the chloroplast. In Marchantia polymorpha (Common liverwort), this protein is Large ribosomal subunit protein uL16c.